The following is a 238-amino-acid chain: Probable amino-acid ABC transporter permease protein y4tF (238 aa).

Residues 29–223 (AWVTIQFTLY…GIALVLSFFM (195 aa)) enclose the ABC transmembrane type-1 domain. 5 helical membrane passes run 33-53 (IQFT…FGIG), 77-97 (LLVQ…MMGI), 103-123 (PVVA…AEIV), 152-172 (VALP…AIAA), and 203-223 (TVYT…SFFM).

The protein belongs to the binding-protein-dependent transport system permease family. HisMQ subfamily.

The protein localises to the cell inner membrane. Probably part of the binding-protein-dependent transport system y4tEFGH for an amino acid. Probably responsible for the translocation of the substrate across the membrane. This chain is Probable amino-acid ABC transporter permease protein y4tF, found in Sinorhizobium fredii (strain NBRC 101917 / NGR234).